A 234-amino-acid polypeptide reads, in one-letter code: Small ribosomal subunit protein uS3 (234 aa).

The region spanning 17 to 86 (VEKFLTKELK…SPQVEVQQVQ (70 aa)) is the KH type-2 domain.

It belongs to the universal ribosomal protein uS3 family. As to quaternary structure, part of the 30S ribosomal subunit.

Functionally, binds the lower part of the 30S subunit head. The sequence is that of Small ribosomal subunit protein uS3 from Methanoculleus marisnigri (strain ATCC 35101 / DSM 1498 / JR1).